The sequence spans 449 residues: Glycine--tRNA ligase (449 aa).

Positions 100 and 158 each coordinate substrate. ATP-binding positions include Arg190 to Glu192, Phe200 to Phe205, Glu275 to Leu276, and Gly319 to Arg322. Residue Phe205–Glu209 participates in substrate binding. Glu315 to Gly319 contributes to the substrate binding site.

This sequence belongs to the class-II aminoacyl-tRNA synthetase family. In terms of assembly, homodimer.

The protein localises to the cytoplasm. The catalysed reaction is tRNA(Gly) + glycine + ATP = glycyl-tRNA(Gly) + AMP + diphosphate. Its function is as follows. Catalyzes the attachment of glycine to tRNA(Gly). The chain is Glycine--tRNA ligase from Mycoplasma pneumoniae (strain ATCC 29342 / M129 / Subtype 1) (Mycoplasmoides pneumoniae).